The chain runs to 85 residues: Probable small nuclear ribonucleoprotein G (85 aa).

The Sm domain occupies 6 to 78; sequence QADPDLTKLL…ILLMEPLESM (73 aa).

The protein belongs to the snRNP Sm proteins family. In terms of assembly, core component of the spliceosomal U1, U2, U4 and U5 small nuclear ribonucleoproteins (snRNPs), the building blocks of the spliceosome. Most spliceosomal snRNPs contain a common set of Sm proteins, SNRPB, SNRPD1, SNRPD2, SNRPD3, SNRPE, SNRPF and SNRPG that assemble in a heptameric protein ring on the Sm site of the small nuclear RNA to form the core snRNP. Component of the U1 snRNP. Component of the U4/U6-U5 tri-snRNP complex. Component of the U7 snRNP complex. Component of the U11/U12 snRNPs that are part of the U12-type spliceosome.

It localises to the cytoplasm. The protein resides in the cytosol. Its subcellular location is the nucleus. Functionally, plays a role in pre-mRNA splicing as a core component of the spliceosomal U1, U2, U4 and U5 small nuclear ribonucleoproteins (snRNPs), the building blocks of the spliceosome. Component of both the pre-catalytic spliceosome B complex and activated spliceosome C complexes. Is also a component of the minor U12 spliceosome. The chain is Probable small nuclear ribonucleoprotein G (snrpG) from Dictyostelium discoideum (Social amoeba).